Consider the following 83-residue polypeptide: Small ribosomal subunit protein uS17 (83 aa).

The protein belongs to the universal ribosomal protein uS17 family. Part of the 30S ribosomal subunit.

In terms of biological role, one of the primary rRNA binding proteins, it binds specifically to the 5'-end of 16S ribosomal RNA. In Chlamydia trachomatis serovar L2 (strain ATCC VR-902B / DSM 19102 / 434/Bu), this protein is Small ribosomal subunit protein uS17.